A 350-amino-acid polypeptide reads, in one-letter code: Cobalt-precorrin-5B C(1)-methyltransferase (350 aa).

This sequence belongs to the CbiD family.

The catalysed reaction is Co-precorrin-5B + S-adenosyl-L-methionine = Co-precorrin-6A + S-adenosyl-L-homocysteine. It functions in the pathway cofactor biosynthesis; adenosylcobalamin biosynthesis; cob(II)yrinate a,c-diamide from sirohydrochlorin (anaerobic route): step 6/10. Its function is as follows. Catalyzes the methylation of C-1 in cobalt-precorrin-5B to form cobalt-precorrin-6A. The protein is Cobalt-precorrin-5B C(1)-methyltransferase of Sulfurisphaera tokodaii (strain DSM 16993 / JCM 10545 / NBRC 100140 / 7) (Sulfolobus tokodaii).